The following is a 379-amino-acid chain: Probable tRNA sulfurtransferase (379 aa).

A THUMP domain is found at 52 to 157; sequence DEFLDKLKFI…RHHAFVFCKI (106 aa). ATP is bound by residues 175–176, R257, G279, and Q288; that span reads LL.

The protein belongs to the ThiI family.

Its subcellular location is the cytoplasm. The catalysed reaction is [ThiI sulfur-carrier protein]-S-sulfanyl-L-cysteine + a uridine in tRNA + 2 reduced [2Fe-2S]-[ferredoxin] + ATP + H(+) = [ThiI sulfur-carrier protein]-L-cysteine + a 4-thiouridine in tRNA + 2 oxidized [2Fe-2S]-[ferredoxin] + AMP + diphosphate. It catalyses the reaction [ThiS sulfur-carrier protein]-C-terminal Gly-Gly-AMP + S-sulfanyl-L-cysteinyl-[cysteine desulfurase] + AH2 = [ThiS sulfur-carrier protein]-C-terminal-Gly-aminoethanethioate + L-cysteinyl-[cysteine desulfurase] + A + AMP + 2 H(+). It participates in cofactor biosynthesis; thiamine diphosphate biosynthesis. In terms of biological role, catalyzes the ATP-dependent transfer of a sulfur to tRNA to produce 4-thiouridine in position 8 of tRNAs, which functions as a near-UV photosensor. Also catalyzes the transfer of sulfur to the sulfur carrier protein ThiS, forming ThiS-thiocarboxylate. This is a step in the synthesis of thiazole, in the thiamine biosynthesis pathway. The sulfur is donated as persulfide by IscS. This Mycoplasmopsis pulmonis (strain UAB CTIP) (Mycoplasma pulmonis) protein is Probable tRNA sulfurtransferase.